The chain runs to 245 residues: 5-oxoprolinase subunit A (245 aa).

Belongs to the LamB/PxpA family. As to quaternary structure, forms a complex composed of PxpA, PxpB and PxpC.

The catalysed reaction is 5-oxo-L-proline + ATP + 2 H2O = L-glutamate + ADP + phosphate + H(+). In terms of biological role, catalyzes the cleavage of 5-oxoproline to form L-glutamate coupled to the hydrolysis of ATP to ADP and inorganic phosphate. This Neisseria meningitidis serogroup C (strain 053442) protein is 5-oxoprolinase subunit A.